We begin with the raw amino-acid sequence, 360 residues long: Phospho-N-acetylmuramoyl-pentapeptide-transferase (360 aa).

The next 10 membrane-spanning stretches (helical) occupy residues 21–41, 70–90, 97–117, 134–154, 168–188, 199–219, 236–256, 263–283, 288–308, and 338–358; these read YLTL…FIVG, GTPT…TLLW, YVWA…VDDY, YLWQ…TASS, VVLN…VGSS, GLAI…AYAS, AGEL…FLWF, VFMG…VAVL, IVLM…MLQV, and VIVR…ATLK.

It belongs to the glycosyltransferase 4 family. MraY subfamily. Requires Mg(2+) as cofactor.

Its subcellular location is the cell inner membrane. The catalysed reaction is UDP-N-acetyl-alpha-D-muramoyl-L-alanyl-gamma-D-glutamyl-meso-2,6-diaminopimeloyl-D-alanyl-D-alanine + di-trans,octa-cis-undecaprenyl phosphate = di-trans,octa-cis-undecaprenyl diphospho-N-acetyl-alpha-D-muramoyl-L-alanyl-D-glutamyl-meso-2,6-diaminopimeloyl-D-alanyl-D-alanine + UMP. The protein operates within cell wall biogenesis; peptidoglycan biosynthesis. Its function is as follows. Catalyzes the initial step of the lipid cycle reactions in the biosynthesis of the cell wall peptidoglycan: transfers peptidoglycan precursor phospho-MurNAc-pentapeptide from UDP-MurNAc-pentapeptide onto the lipid carrier undecaprenyl phosphate, yielding undecaprenyl-pyrophosphoryl-MurNAc-pentapeptide, known as lipid I. The protein is Phospho-N-acetylmuramoyl-pentapeptide-transferase of Methylococcus capsulatus (strain ATCC 33009 / NCIMB 11132 / Bath).